We begin with the raw amino-acid sequence, 742 residues long: Ectonucleotide pyrophosphatase/phosphodiesterase 1 (742 aa).

Residues 1 to 113 are Cytoplasmic-facing; that stretch reads MELQNDLESL…TGFHSKVPFK (113 aa). A helical membrane pass occupies residues 114-134; it reads IIFRTLFGSLVFAIFLILMIN. Topologically, residues 135–742 are extracellular; the sequence is IAKPHHSTRV…SIDDLVDSDT (608 aa). N161 and N204 each carry an N-linked (GlcNAc...) asparagine glycan. The phosphodiesterase stretch occupies residues 168-545; it reads PLTIVISLDG…VFTIGSHGYD (378 aa). The active-site Nucleophile is T219. Residues N264, N296, and N403 are each glycosylated (N-linked (GlcNAc...) asparagine). Residues 640–659 are compositionally biased toward acidic residues; it reads EETEQDNVDNDNDDNDDGNT. Disordered stretches follow at residues 640–670 and 686–711; these read EETE…SSSL and TLLG…TAST. A compositionally biased stretch (low complexity) spans 691–711; it reads TSPSSRSSSSSSIQASATAST.

This sequence belongs to the nucleotide pyrophosphatase/phosphodiesterase family. Post-translationally, autophosphorylated as part of the catalytic cycle of phosphodiesterase/pyrophosphatase activity. In terms of processing, N-glycosylated.

It is found in the membrane. The enzyme catalyses Hydrolytically removes 5'-nucleotides successively from the 3'-hydroxy termini of 3'-hydroxy-terminated oligonucleotides.. It carries out the reaction a ribonucleoside 5'-triphosphate + H2O = a ribonucleoside 5'-phosphate + diphosphate + H(+). It catalyses the reaction a 2'-deoxyribonucleoside 5'-triphosphate + H2O = a 2'-deoxyribonucleoside 5'-phosphate + diphosphate + H(+). In terms of biological role, mediates extracellular nucleotide derived phosphate hydrolysis along with NPP2 and PHO5. This is Ectonucleotide pyrophosphatase/phosphodiesterase 1 (NPP1) from Saccharomyces cerevisiae (strain ATCC 204508 / S288c) (Baker's yeast).